The chain runs to 542 residues: Endonuclease 4 homolog (542 aa).

2 disordered regions span residues 89–123 and 141–234; these read NEEI…QTSI and PFFS…ENKF. Composition is skewed to low complexity over residues 99–115 and 147–170; these read SKKL…QQSK and NNAS…TTTT. Positions 171–206 form a coiled coil; that stretch reads TKKRNNKDEENEDDNEEEEEEEEEEEDKKSKKKTTT. Acidic residues predominate over residues 179–196; sequence EENEDDNEEEEEEEEEEE. The span at 205–215 shows a compositional bias: low complexity; that stretch reads TTTTTTTTTTA. Residues 216–227 are compositionally biased toward basic residues; that stretch reads YKKKSSPKKKKV. The Nuclear localization signal signature appears at 222–227; it reads PKKKKV. Zn(2+) is bound by residues histidine 328, histidine 368, glutamate 404, aspartate 438, histidine 441, histidine 475, aspartate 488, histidine 490, and glutamate 520.

Belongs to the AP endonuclease 2 family. The cofactor is Zn(2+).

It localises to the nucleus. The catalysed reaction is Endonucleolytic cleavage to 5'-phosphooligonucleotide end-products.. In terms of biological role, plays a role in DNA repair. It cleaves phosphodiester bonds at apurinic or apyrimidinic sites (AP sites) to produce new 5'-ends that are base-free deoxyribose 5-phosphate residues. The protein is Endonuclease 4 homolog (apnA) of Dictyostelium discoideum (Social amoeba).